The primary structure comprises 322 residues: uncharacterized protein (322 aa).

An N-terminal signal peptide occupies residues 1 to 32 (MRDGIGKRAASALFLCGVLVMLAVSSAIVSSA).

This is an uncharacterized protein from Bacillus subtilis (strain 168).